The primary structure comprises 689 residues: Protein asunder (689 aa).

A coiled-coil region spans residues 521–550; that stretch reads NGARLKLSKAKDQYRLLYRELEQLIQLNAT. 2 disordered regions span residues 578-619 and 662-689; these read GASL…SKRR and PDFG…SVRS. A compositionally biased stretch (low complexity) spans 599-614; the sequence is SSGSASGSSNSNSLLK. The Nuclear localization signal (NLS) motif lies at 613-619; the sequence is LKASKRR.

It belongs to the Integrator subunit 13 family. As to quaternary structure, belongs to the multiprotein complex Integrator, at least composed of IntS1, IntS2, IntS3, IntS4, omd/IntS5, IntS6, defl/IntS7, IntS8, IntS9, IntS10, IntS11, IntS12, asun/IntS13, IntS14 and IntS15. The core complex associates with protein phosphatase 2A subunits mts/PP2A and Pp2A-29B, to form the Integrator-PP2A (INTAC) complex. Post-translationally, phosphorylated.

The protein localises to the nucleus. The protein resides in the cytoplasm. It is found in the perinuclear region. Its function is as follows. Component of the integrator complex, a multiprotein complex that terminates RNA polymerase II (Pol II) transcription in the promoter-proximal region of genes. The integrator complex provides a quality checkpoint during transcription elongation by driving premature transcription termination of transcripts that are unfavorably configured for transcriptional elongation: the complex terminates transcription by (1) catalyzing dephosphorylation of the C-terminal domain (CTD) of Pol II subunit Polr2A/Rbp1 and Spt5, and (2) degrading the exiting nascent RNA transcript via endonuclease activity. The integrator complex is also involved in the 3'-end processing of the U7 snRNA, and also the spliceosomal snRNAs U1, U2, U4 and U5. The polypeptide is Protein asunder (asun) (Drosophila yakuba (Fruit fly)).